The primary structure comprises 261 residues: Pantothenate synthetase (261 aa).

ATP is bound at residue 29 to 36; the sequence is MGALHNGH. Histidine 36 acts as the Proton donor in catalysis. Position 60 (glutamine 60) interacts with (R)-pantoate. Glutamine 60 contributes to the beta-alanine binding site. 147-150 provides a ligand contact to ATP; sequence GEKD. Glutamine 153 contacts (R)-pantoate. An ATP-binding site is contributed by 184–187; the sequence is LSSR.

This sequence belongs to the pantothenate synthetase family. Homodimer.

It localises to the cytoplasm. The catalysed reaction is (R)-pantoate + beta-alanine + ATP = (R)-pantothenate + AMP + diphosphate + H(+). Its pathway is cofactor biosynthesis; (R)-pantothenate biosynthesis; (R)-pantothenate from (R)-pantoate and beta-alanine: step 1/1. Its function is as follows. Catalyzes the condensation of pantoate with beta-alanine in an ATP-dependent reaction via a pantoyl-adenylate intermediate. In Francisella tularensis subsp. holarctica (strain FTNF002-00 / FTA), this protein is Pantothenate synthetase.